The chain runs to 263 residues: Small ribosomal subunit protein uS3 (263 aa).

Residues 40 to 108 (IRNYLFKKFH…HIKVDVDVLE (69 aa)) enclose the KH type-2 domain. The interval 224–263 (KPKGSEANHQRRNSNKSKDYRDNKNKQFNKNHQNQQPAKE) is disordered. Positions 239–248 (KSKDYRDNKN) are enriched in basic and acidic residues. Residues 249 to 263 (KQFNKNHQNQQPAKE) show a composition bias toward low complexity.

Belongs to the universal ribosomal protein uS3 family. In terms of assembly, part of the 30S ribosomal subunit. Forms a tight complex with proteins S10 and S14.

Binds the lower part of the 30S subunit head. Binds mRNA in the 70S ribosome, positioning it for translation. This is Small ribosomal subunit protein uS3 from Mycoplasmoides gallisepticum (strain R(low / passage 15 / clone 2)) (Mycoplasma gallisepticum).